The following is a 975-amino-acid chain: Macrophage colony-stimulating factor 1 receptor 1 (975 aa).

The first 17 residues, Met1–Ser17, serve as a signal peptide directing secretion. The Extracellular segment spans residues Val18–Ser519. 5 consecutive Ig-like C2-type domains span residues Ser34–Lys113, Ser125–Ile208, Met221–Val310, Gly329–Lys407, and Phe404–Ser513. 3 disulfides stabilise this stretch: Cys49-Cys93, Cys140-Cys189, and Cys236-Cys292. N-linked (GlcNAc...) asparagine glycosylation is found at Asn156, Asn165, Asn246, Asn250, Asn289, Asn301, Asn399, Asn420, and Asn451. A disulfide bridge connects residues Cys426 and Cys495. A helical membrane pass occupies residues Thr520 to Tyr540. At Lys541 to Cys975 the chain is on the cytoplasmic side. Residues Gln544–Lys576 form a regulatory juxtamembrane domain region. Tyr563 is subject to Phosphotyrosine; by autocatalysis. The Protein kinase domain maps to Leu584 to Leu918. Residues Leu590–Val598 and Lys619 contribute to the ATP site. A phosphotyrosine; by autocatalysis mark is found at Tyr702 and Tyr726. Residue Asp782 is the Proton acceptor of the active site. Positions Asp800–Pro822 are activation loop. Residues Tyr813 and Tyr929 each carry the phosphotyrosine; by autocatalysis modification. The disordered stretch occupies residues Glu939–Glu963. Basic and acidic residues predominate over residues Asp944–Asp958. Tyr972 bears the Phosphotyrosine; by autocatalysis mark.

Belongs to the protein kinase superfamily. Tyr protein kinase family. CSF-1/PDGF receptor subfamily. As to quaternary structure, monomer. Homodimer. Interacts with CSF1. Post-translationally, autophosphorylated in response to CSF1 binding. autophosphorylation, leading to its degradation. Ubiquitinated. Becomes rapidly polyubiquitinated after autophosphorylation, leading to its degradation.

The protein localises to the cell membrane. It catalyses the reaction L-tyrosyl-[protein] + ATP = O-phospho-L-tyrosyl-[protein] + ADP + H(+). Present in an inactive conformation in the absence of bound ligand. CSF1 binding leads to dimerization and activation by autophosphorylation on tyrosine residues. Functionally, tyrosine-protein kinase that acts as a cell-surface receptor for CSF1 and plays an essential role in the regulation of survival, proliferation and differentiation of hematopoietic precursor cells, especially mononuclear phagocytes, such as macrophages and monocytes. Plays an important role in innate immunity and in inflammatory processes. Plays an important role in the regulation of osteoclast proliferation and differentiation, the regulation of bone resorption, and is required for normal bone development. Promotes reorganization of the actin cytoskeleton, regulates formation of membrane ruffles, cell adhesion and cell migration. Activates several signaling pathways in response to ligand binding. This Takifugu rubripes (Japanese pufferfish) protein is Macrophage colony-stimulating factor 1 receptor 1 (csf1r1).